Consider the following 106-residue polypeptide: Nucleoid-associated protein Exig_0019 (106 aa).

Residues 1 to 16 (MRGMGNMNNMMKQMQK) show a composition bias toward low complexity. The segment at 1–23 (MRGMGNMNNMMKQMQKMQKDMAK) is disordered.

Belongs to the YbaB/EbfC family. In terms of assembly, homodimer.

Its subcellular location is the cytoplasm. It is found in the nucleoid. In terms of biological role, binds to DNA and alters its conformation. May be involved in regulation of gene expression, nucleoid organization and DNA protection. This chain is Nucleoid-associated protein Exig_0019, found in Exiguobacterium sibiricum (strain DSM 17290 / CCUG 55495 / CIP 109462 / JCM 13490 / 255-15).